Consider the following 224-residue polypeptide: Phosphoglycolate phosphatase (224 aa).

Catalysis depends on Asp11, which acts as the Nucleophile. Mg(2+) is bound by residues Asp11, Asp13, and Asp177.

Belongs to the HAD-like hydrolase superfamily. CbbY/CbbZ/Gph/YieH family. Mg(2+) serves as cofactor.

It carries out the reaction 2-phosphoglycolate + H2O = glycolate + phosphate. It functions in the pathway organic acid metabolism; glycolate biosynthesis; glycolate from 2-phosphoglycolate: step 1/1. In terms of biological role, specifically catalyzes the dephosphorylation of 2-phosphoglycolate. Is involved in the dissimilation of the intracellular 2-phosphoglycolate formed during the DNA repair of 3'-phosphoglycolate ends, a major class of DNA lesions induced by oxidative stress. This Mannheimia succiniciproducens (strain KCTC 0769BP / MBEL55E) protein is Phosphoglycolate phosphatase.